The following is a 777-amino-acid chain: Acyl-homoserine lactone acylase PvdQ (777 aa).

Positions 1 to 25 are cleaved as a signal peptide; it reads MIISRQLPSFCLAALFLSFSGGAHA. Residues 196 to 218 constitute a propeptide, spacer peptide; it reads AGLPAEHWQLAAARQQRFALDRG. The active-site Nucleophile is the Ser219.

This sequence belongs to the peptidase S45 family. As to quaternary structure, heterodimer of an alpha subunit and a beta subunit processed from the same precursor.

It is found in the periplasm. The enzyme catalyses an N-acyl-L-homoserine lactone + H2O = L-homoserine lactone + a carboxylate. Its function is as follows. Catalyzes the deacylation of acyl-homoserine lactone (AHL or acyl-HSL), releasing homoserine lactone (HSL) and the corresponding fatty acid. Possesses a specificity for the degradation of long-chain acyl-HSLs (side chains of 11 to 14 carbons in length). This chain is Acyl-homoserine lactone acylase PvdQ (pvdQ), found in Pseudomonas fluorescens (strain ATCC BAA-477 / NRRL B-23932 / Pf-5).